The primary structure comprises 267 residues: Mediator of RNA polymerase II transcription subunit 18 (267 aa).

The protein belongs to the Mediator complex subunit 18 family. In terms of assembly, component of the Mediator complex.

Its subcellular location is the nucleus. Component of the Mediator complex, a coactivator involved in the regulated transcription of nearly all RNA polymerase II-dependent genes. Mediator functions as a bridge to convey information from gene-specific regulatory proteins to the basal RNA polymerase II transcription machinery. Mediator is recruited to promoters by direct interactions with regulatory proteins and serves as a scaffold for the assembly of a functional preinitiation complex with RNA polymerase II and the general transcription factors. In Coccidioides immitis (strain RS) (Valley fever fungus), this protein is Mediator of RNA polymerase II transcription subunit 18 (SRB5).